Reading from the N-terminus, the 93-residue chain is DNA-binding protein Fis (93 aa).

The segment at residues 74–93 is a DNA-binding region (H-T-H motif); the sequence is QTRAAQMMGINRGTLRKKLK.

It belongs to the transcriptional regulatory Fis family. In terms of assembly, homodimer.

In terms of biological role, activates ribosomal RNA transcription. Plays a direct role in upstream activation of rRNA promoters. In Proteus vulgaris, this protein is DNA-binding protein Fis.